The primary structure comprises 213 residues: MSTLHKVKAYFGMAPMDDYDDEYYDDVDAPAPRRAPVEDRRYPRRGERFADDAEYGYDEPGYRAGGPAGYADEDRFVSRHAPSREFDRPAPRLGSLRGSAPTRGALAMDPRRAAIFDEGSPLSKITTLRPKDYSEARTIGERFRDGTPVIMDLVSMDNADAKRVVDFAAGLAFALRGSFDKVATKVFLLSPADIDVSAEERRRIAESGFYSYQ.

The disordered stretch occupies residues 27–103 (VDAPAPRRAP…GSLRGSAPTR (77 aa)). Basic and acidic residues-rich tracts occupy residues 35-51 (APVE…RFAD) and 72-90 (DEDR…DRPA).

It belongs to the SepF family. As to quaternary structure, homodimer. Interacts with FtsZ.

The protein localises to the cytoplasm. Functionally, cell division protein that is part of the divisome complex and is recruited early to the Z-ring. Probably stimulates Z-ring formation, perhaps through the cross-linking of FtsZ protofilaments. Its function overlaps with FtsA. The polypeptide is Cell division protein SepF (Mycobacteroides abscessus (strain ATCC 19977 / DSM 44196 / CCUG 20993 / CIP 104536 / JCM 13569 / NCTC 13031 / TMC 1543 / L948) (Mycobacterium abscessus)).